A 98-amino-acid chain; its full sequence is Ferredoxin-like protein (98 aa).

Positions 57-87 constitute a 4Fe-4S ferredoxin-type domain; the sequence is GQVEVTVDGCIECGTCRVIAEPTGDIEWSHP.

To ferredoxins from P.putida and C.tartarivorum, ferredoxin I from A.vinelandii, ferredoxin II from D.desulfuricans.

Could be a 3Fe-4S cluster-containing protein. The polypeptide is Ferredoxin-like protein (fixX) (Bradyrhizobium diazoefficiens (strain JCM 10833 / BCRC 13528 / IAM 13628 / NBRC 14792 / USDA 110)).